Consider the following 883-residue polypeptide: DNA mismatch repair protein MutS (883 aa).

633–640 (GPNMGGKS) contacts ATP.

Belongs to the DNA mismatch repair MutS family.

Functionally, this protein is involved in the repair of mismatches in DNA. It is possible that it carries out the mismatch recognition step. This protein has a weak ATPase activity. This chain is DNA mismatch repair protein MutS, found in Bordetella parapertussis (strain 12822 / ATCC BAA-587 / NCTC 13253).